A 224-amino-acid chain; its full sequence is Putative ankyrin repeat protein R845 (224 aa).

ANK repeat units lie at residues 1-14 (MVEY…DVRS), 15-44 (NYDH…DVSM), 46-74 (YDYI…DPRT), 75-104 (NNDK…DIRI), 105-134 (DNDS…DIRA), 136-164 (NDYS…DVRA), 165-194 (DNDY…DFRA), and 196-224 (NDCA…VCPY).

In Acanthamoeba polyphaga mimivirus (APMV), this protein is Putative ankyrin repeat protein R845.